A 1288-amino-acid chain; its full sequence is (E3-independent) E2 ubiquitin-conjugating enzyme UBE2O (1288 aa).

2 stretches are compositionally biased toward low complexity: residues 1–26 (MADP…APAA) and 34–47 (ATDS…DSGP). 2 disordered regions span residues 1-51 (MADP…EAGS) and 80-109 (EDSD…EGRA). Ser-45, Ser-82, Ser-84, and Ser-394 each carry phosphoserine. 2 disordered regions span residues 396–529 (TPDT…KNKV) and 711–743 (ESDY…NGLV). Residues 401–418 (CPRDHSMEDPDKKGEARA) are compositionally biased toward basic and acidic residues. Ser-436 carries the post-translational modification Phosphoserine. Residues 440-450 (MQDEGSEELQE) are compositionally biased toward acidic residues. The span at 462-472 (EGGDDGLHSAE) shows a compositional bias: basic and acidic residues. The span at 473 to 485 (QDADDEAADDTDD) shows a compositional bias: acidic residues. Phosphothreonine occurs at positions 483 and 486. Positions 486–502 (TSSVTSSASSTTSSQSG) are enriched in low complexity. Ser-510 is modified (phosphoserine). Positions 517-528 (NLKRKHKRKKNK) are enriched in basic residues. Over residues 717–726 (VEGSSSGASS) the composition is skewed to low complexity. The segment covering 727-737 (DEWEDDSDSWE) has biased composition (acidic residues). Residues 809 to 879 (RELKEAIKIL…IAEEEKMEAV (71 aa)) are a coiled coil. Ser-833 carries the phosphoserine modification. A Phosphothreonine modification is found at Thr-835. Position 836 is a phosphoserine (Ser-836). Residues 872-890 (EEEKMEAVPDTERKEEKPE) show a composition bias toward basic and acidic residues. Residues 872–899 (EEEKMEAVPDTERKEEKPEVQSPVKAEW) form a disordered region. Ser-893 is modified (phosphoserine). The UBC core domain occupies 950 to 1110 (KFFSTVRKEM…ALIRVVQSMT (161 aa)). Cys-1037 serves as the catalytic Glycyl thioester intermediate. Residues 1158–1247 (GALKDSSSLE…RSFLPEKSGY (90 aa)) form a disordered region.

This sequence belongs to the ubiquitin-conjugating enzyme family. Interacts with CPNE1 (via VWFA domain) and CPNE4 (via VWFA domain). Interacts with UBR2. Post-translationally, phosphorylated. Phosphorylation affects subcellular location. In terms of processing, ubiquitinated: autoubiquitinates, possibly affecting its subcellular location. As to expression, highly expressed in reticulocytes.

The protein localises to the cytoplasm. It is found in the nucleus. The enzyme catalyses S-ubiquitinyl-[E1 ubiquitin-activating enzyme]-L-cysteine + [acceptor protein]-L-lysine = [E1 ubiquitin-activating enzyme]-L-cysteine + N(6)-monoubiquitinyl-[acceptor protein]-L-lysine.. The protein operates within protein modification; protein ubiquitination. Its activity is regulated as follows. Inhibited by inorganic arsenite such as phenylarsenoxides. E2/E3 hybrid ubiquitin-protein ligase that displays both E2 and E3 ligase activities and mediates monoubiquitination of target proteins. Negatively regulates TRAF6-mediated NF-kappa-B activation independently of its E2 activity. Acts as a positive regulator of BMP7 signaling by mediating monoubiquitination of SMAD6, thereby regulating adipogenesis. Mediates monoubiquitination at different sites of the nuclear localization signal (NLS) of BAP1, leading to cytoplasmic retention of BAP1. Also able to monoubiquitinate the NLS of other chromatin-associated proteins, such as INO80 and CXXC1, affecting their subcellular location. Acts as a regulator of retrograde transport by assisting the TRIM27:MAGEL2 E3 ubiquitin ligase complex to mediate 'Lys-63'-linked ubiquitination of WASHC1, leading to promote endosomal F-actin assembly. In Mus musculus (Mouse), this protein is (E3-independent) E2 ubiquitin-conjugating enzyme UBE2O (Ube2o).